The sequence spans 122 residues: Cofilin-5 (122 aa).

The region spanning 3–122 is the ADF-H domain; the sequence is SRIIEIDPNC…VKDLIQLSNL (120 aa).

The protein belongs to the actin-binding proteins ADF family.

The protein localises to the cytoplasm. It is found in the cytoskeleton. Functionally, controls actin polymerization and depolymerization. This Dictyostelium discoideum (Social amoeba) protein is Cofilin-5 (cofF).